A 1343-amino-acid polypeptide reads, in one-letter code: DNA-directed RNA polymerase subunit beta (1343 aa).

Belongs to the RNA polymerase beta chain family. The RNAP catalytic core consists of 2 alpha, 1 beta, 1 beta' and 1 omega subunit. When a sigma factor is associated with the core the holoenzyme is formed, which can initiate transcription.

The enzyme catalyses RNA(n) + a ribonucleoside 5'-triphosphate = RNA(n+1) + diphosphate. DNA-dependent RNA polymerase catalyzes the transcription of DNA into RNA using the four ribonucleoside triphosphates as substrates. The protein is DNA-directed RNA polymerase subunit beta of Shewanella frigidimarina (strain NCIMB 400).